The sequence spans 201 residues: Probable nicotinate-nucleotide adenylyltransferase (201 aa).

Belongs to the NadD family.

The enzyme catalyses nicotinate beta-D-ribonucleotide + ATP + H(+) = deamido-NAD(+) + diphosphate. The protein operates within cofactor biosynthesis; NAD(+) biosynthesis; deamido-NAD(+) from nicotinate D-ribonucleotide: step 1/1. In terms of biological role, catalyzes the reversible adenylation of nicotinate mononucleotide (NaMN) to nicotinic acid adenine dinucleotide (NaAD). The polypeptide is Probable nicotinate-nucleotide adenylyltransferase (Clostridium botulinum (strain Langeland / NCTC 10281 / Type F)).